A 536-amino-acid polypeptide reads, in one-letter code: Probable serine/threonine-protein kinase DDB_G0268550 (536 aa).

The Protein kinase domain maps to 14 to 305 (EIIEKNYRKG…IDVLEIHPFL (292 aa)). ATP is bound by residues 20–28 (YRKGGFSKI) and lysine 51. Aspartate 147 functions as the Proton acceptor in the catalytic mechanism. The interval 161–192 (DNNNNNNNNNNNNNNNNNNNSNINDDNNNSNS) is disordered.

It belongs to the protein kinase superfamily. Ser/Thr protein kinase family. It depends on Mg(2+) as a cofactor.

It carries out the reaction L-seryl-[protein] + ATP = O-phospho-L-seryl-[protein] + ADP + H(+). The enzyme catalyses L-threonyl-[protein] + ATP = O-phospho-L-threonyl-[protein] + ADP + H(+). The protein is Probable serine/threonine-protein kinase DDB_G0268550 of Dictyostelium discoideum (Social amoeba).